Reading from the N-terminus, the 322-residue chain is Thioredoxin reductase (322 aa).

FAD-binding positions include 11–14 (SGPA), 40–41 (IA), Q45, N54, V87, and C145. C142 and C145 form a disulfide bridge. S192 is subject to Phosphoserine. Residue T278 is modified to Phosphothreonine. S279 carries the phosphoserine modification. FAD contacts are provided by residues D288 and 295–297 (RQA).

The protein belongs to the class-II pyridine nucleotide-disulfide oxidoreductase family. Homodimer. FAD is required as a cofactor.

The protein resides in the cytoplasm. It catalyses the reaction [thioredoxin]-dithiol + NADP(+) = [thioredoxin]-disulfide + NADPH + H(+). This is Thioredoxin reductase (trr1) from Schizosaccharomyces pombe (strain 972 / ATCC 24843) (Fission yeast).